The sequence spans 189 residues: MSCCGCSGGCGSSCGGCGSNCCKPVCCCKPVCCCVPACSCSSCGDCKGGCGSCGGCKGGCGSCGGCKGGCGSCGGCKGGCGSCGGCGSCGGCKGGCSSCGGCGSCGGCKGGCGSCGGCGSCGGCGSCGCCQSSCCKPCCCQSSCCKPCCCQSSCCQSSCCKPCCCQSSCCKPCCCQSSCCAPVCCQCKI.

8 tandem repeats follow at residues 21–24 (CCKP), 27–30 (CCKP), 33–36 (CCVP), 134–137 (CCKP), 144–147 (CCKP), 159–162 (CCKP), 169–172 (CCKP), and 179–182 (CCAP). The 8 X 4 AA repeats of C-C-X-P stretch occupies residues 27 to 182 (CCKPVCCCVP…CCCQSSCCAP (156 aa)).

The protein belongs to the KRTAP type 5 family. Interacts with hair keratins.

In the hair cortex, hair keratin intermediate filaments are embedded in an interfilamentous matrix, consisting of hair keratin-associated protein (KRTAP), which are essential for the formation of a rigid and resistant hair shaft through their extensive disulfide bond cross-linking with abundant cysteine residues of hair keratins. The matrix proteins include the high-sulfur and high-glycine-tyrosine keratins. This Mus musculus (Mouse) protein is Keratin-associated protein 5-2.